A 469-amino-acid chain; its full sequence is Hydrogen cyanide synthase subunit HcnB (469 aa).

Heterotrimer of HcnA, HcnB and HcnC.

Its subcellular location is the cell membrane. It catalyses the reaction glycine + 2 A = hydrogen cyanide + 2 AH2 + CO2. Its function is as follows. A three-component membrane-bound flavoenzyme that catalyzes the formation of hydrogen cyanide, a secondary metabolite, by transfer of electrons to a cyanide-resistant branch of the aerobic respiratory chain. Contributes to suppression of black root rot of tobacco. The sequence is that of Hydrogen cyanide synthase subunit HcnB from Pseudomonas protegens (strain DSM 19095 / LMG 27888 / CFBP 6595 / CHA0).